Here is a 299-residue protein sequence, read N- to C-terminus: Phosphatidylserine decarboxylase proenzyme (299 aa).

Residues Asp-115, His-171, and Ser-258 each act as charge relay system; for autoendoproteolytic cleavage activity in the active site. Ser-258 acts as the Schiff-base intermediate with substrate; via pyruvic acid; for decarboxylase activity in catalysis. The residue at position 258 (Ser-258) is a Pyruvic acid (Ser); by autocatalysis.

It belongs to the phosphatidylserine decarboxylase family. PSD-B subfamily. Prokaryotic type II sub-subfamily. In terms of assembly, heterodimer of a large membrane-associated beta subunit and a small pyruvoyl-containing alpha subunit. The cofactor is pyruvate. Is synthesized initially as an inactive proenzyme. Formation of the active enzyme involves a self-maturation process in which the active site pyruvoyl group is generated from an internal serine residue via an autocatalytic post-translational modification. Two non-identical subunits are generated from the proenzyme in this reaction, and the pyruvate is formed at the N-terminus of the alpha chain, which is derived from the carboxyl end of the proenzyme. The autoendoproteolytic cleavage occurs by a canonical serine protease mechanism, in which the side chain hydroxyl group of the serine supplies its oxygen atom to form the C-terminus of the beta chain, while the remainder of the serine residue undergoes an oxidative deamination to produce ammonia and the pyruvoyl prosthetic group on the alpha chain. During this reaction, the Ser that is part of the protease active site of the proenzyme becomes the pyruvoyl prosthetic group, which constitutes an essential element of the active site of the mature decarboxylase.

The protein resides in the cell membrane. The catalysed reaction is a 1,2-diacyl-sn-glycero-3-phospho-L-serine + H(+) = a 1,2-diacyl-sn-glycero-3-phosphoethanolamine + CO2. Its pathway is phospholipid metabolism; phosphatidylethanolamine biosynthesis; phosphatidylethanolamine from CDP-diacylglycerol: step 2/2. Functionally, catalyzes the formation of phosphatidylethanolamine (PtdEtn) from phosphatidylserine (PtdSer). The polypeptide is Phosphatidylserine decarboxylase proenzyme (Chlamydia felis (strain Fe/C-56) (Chlamydophila felis)).